Here is a 132-residue protein sequence, read N- to C-terminus: D-ribose pyranase (132 aa).

The Proton donor role is filled by histidine 20. Substrate-binding positions include aspartate 28, histidine 99, and 121-123 (YAN).

It belongs to the RbsD / FucU family. RbsD subfamily. As to quaternary structure, homodecamer.

It is found in the cytoplasm. The enzyme catalyses beta-D-ribopyranose = beta-D-ribofuranose. It functions in the pathway carbohydrate metabolism; D-ribose degradation; D-ribose 5-phosphate from beta-D-ribopyranose: step 1/2. Catalyzes the interconversion of beta-pyran and beta-furan forms of D-ribose. In Chromobacterium violaceum (strain ATCC 12472 / DSM 30191 / JCM 1249 / CCUG 213 / NBRC 12614 / NCIMB 9131 / NCTC 9757 / MK), this protein is D-ribose pyranase.